Consider the following 386-residue polypeptide: Acetylornithine aminotransferase (386 aa).

Residues 94 to 95 (GT) and Phe121 contribute to the pyridoxal 5'-phosphate site. Arg124 is a N(2)-acetyl-L-ornithine binding site. Pyridoxal 5'-phosphate is bound at residue 206 to 209 (DEVQ). Lys235 is subject to N6-(pyridoxal phosphate)lysine. Ser263 contributes to the N(2)-acetyl-L-ornithine binding site. Residue Thr264 coordinates pyridoxal 5'-phosphate.

This sequence belongs to the class-III pyridoxal-phosphate-dependent aminotransferase family. ArgD subfamily. In terms of assembly, homodimer. Pyridoxal 5'-phosphate is required as a cofactor.

It localises to the cytoplasm. It catalyses the reaction N(2)-acetyl-L-ornithine + 2-oxoglutarate = N-acetyl-L-glutamate 5-semialdehyde + L-glutamate. Its pathway is amino-acid biosynthesis; L-arginine biosynthesis; N(2)-acetyl-L-ornithine from L-glutamate: step 4/4. The chain is Acetylornithine aminotransferase from Listeria monocytogenes serotype 4b (strain F2365).